Here is a 130-residue protein sequence, read N- to C-terminus: Small ribosomal subunit protein uS9 (130 aa).

Belongs to the universal ribosomal protein uS9 family.

The polypeptide is Small ribosomal subunit protein uS9 (Pseudomonas fluorescens (strain ATCC BAA-477 / NRRL B-23932 / Pf-5)).